The chain runs to 542 residues: Propane 2-monooxygenase, hydroxylase component large subunit (542 aa).

Residues glutamate 97, glutamate 127, histidine 130, glutamate 192, glutamate 226, and histidine 229 each contribute to the Fe cation site.

It belongs to the TmoA/XamoA family. The propane 2-monooxygenase multicomponent enzyme system is composed of an electron transfer component and a monooxygenase component interacting with the effector protein MimD. The electron transfer component is composed of a reductase (MimB), and the monooxygenase component is formed by a large subunit (MimA) and a small subunit (MimC). Requires the presence of the chaperonin-like protein MimG to ensure a productive folding, resulting of a soluble MimA, which leads to the active form of MimABCD. The cofactor is Fe(2+).

It carries out the reaction propane + NADH + O2 + H(+) = propan-2-ol + NAD(+) + H2O. The enzyme catalyses acetone + NADH + O2 + H(+) = hydroxyacetone + NAD(+) + H2O. It catalyses the reaction butan-2-one + NADH + O2 + H(+) = 1-hydroxy-2-butanone + NAD(+) + H2O. The catalysed reaction is phenol + NADH + O2 + H(+) = hydroquinone + NAD(+) + H2O. Component of the propane 2-monooxygenase multicomponent enzyme system which is involved in the degradation of propane via the O2-dependent hydroxylation of propane. Also involved in the degradation of acetone via the O2-dependent hydroxylation of acetone. Also able to catalyze the oxidation of phenol, methylethylketone (2-butanone), 1-propanol and 2-propanol. The chain is Propane 2-monooxygenase, hydroxylase component large subunit from Mycolicibacterium smegmatis (strain ATCC 700084 / mc(2)155) (Mycobacterium smegmatis).